A 306-amino-acid polypeptide reads, in one-letter code: MIFQRTVQKMVKATGVGLHSGNKVTLSIMPAPVNTGIVLVRTDMSPAVAIPAKAEQVRETTMCTALVNDEGIRISTIEHLFAALAGLGIDNAVIEVDAPEIPIMDGSASPFVFLLQSAGIKEQSAPKKYLKIKRPVRVEDGDKWAELKPFKGFRVNFKIDFAHPEIARSQQHVVMDFSTSAFVKDISRARTFGFMRDIEYLRANNLALGGSMENAVVLDEYRVLNPDGLRYEDEFVKHKILDAFGDLYVAGHAILGEFTAYKTGHALNNQLVRALLAQQDAWELVSFEKEADAPVSFTVPGGVVFA.

Positions 79, 238, and 242 each coordinate Zn(2+). Residue His265 is the Proton donor of the active site.

Belongs to the LpxC family. Requires Zn(2+) as cofactor.

The enzyme catalyses a UDP-3-O-[(3R)-3-hydroxyacyl]-N-acetyl-alpha-D-glucosamine + H2O = a UDP-3-O-[(3R)-3-hydroxyacyl]-alpha-D-glucosamine + acetate. Its pathway is glycolipid biosynthesis; lipid IV(A) biosynthesis; lipid IV(A) from (3R)-3-hydroxytetradecanoyl-[acyl-carrier-protein] and UDP-N-acetyl-alpha-D-glucosamine: step 2/6. Its function is as follows. Catalyzes the hydrolysis of UDP-3-O-myristoyl-N-acetylglucosamine to form UDP-3-O-myristoylglucosamine and acetate, the committed step in lipid A biosynthesis. The protein is UDP-3-O-acyl-N-acetylglucosamine deacetylase of Shewanella oneidensis (strain ATCC 700550 / JCM 31522 / CIP 106686 / LMG 19005 / NCIMB 14063 / MR-1).